We begin with the raw amino-acid sequence, 382 residues long: Queuine tRNA-ribosyltransferase (382 aa).

The active-site Proton acceptor is the aspartate 96. Residues 96–100 (DSGGF), aspartate 151, glutamine 194, and glycine 221 each bind substrate. The interval 252–258 (GVGAPDS) is RNA binding. Aspartate 271 functions as the Nucleophile in the catalytic mechanism. The interval 276 to 280 (TRIAR) is RNA binding; important for wobble base 34 recognition. Cysteine 309, cysteine 311, cysteine 314, and histidine 340 together coordinate Zn(2+).

It belongs to the queuine tRNA-ribosyltransferase family. In terms of assembly, homodimer. Within each dimer, one monomer is responsible for RNA recognition and catalysis, while the other monomer binds to the replacement base PreQ1. Zn(2+) is required as a cofactor.

It carries out the reaction 7-aminomethyl-7-carbaguanine + guanosine(34) in tRNA = 7-aminomethyl-7-carbaguanosine(34) in tRNA + guanine. It functions in the pathway tRNA modification; tRNA-queuosine biosynthesis. Its function is as follows. Catalyzes the base-exchange of a guanine (G) residue with the queuine precursor 7-aminomethyl-7-deazaguanine (PreQ1) at position 34 (anticodon wobble position) in tRNAs with GU(N) anticodons (tRNA-Asp, -Asn, -His and -Tyr). Catalysis occurs through a double-displacement mechanism. The nucleophile active site attacks the C1' of nucleotide 34 to detach the guanine base from the RNA, forming a covalent enzyme-RNA intermediate. The proton acceptor active site deprotonates the incoming PreQ1, allowing a nucleophilic attack on the C1' of the ribose to form the product. After dissociation, two additional enzymatic reactions on the tRNA convert PreQ1 to queuine (Q), resulting in the hypermodified nucleoside queuosine (7-(((4,5-cis-dihydroxy-2-cyclopenten-1-yl)amino)methyl)-7-deazaguanosine). This chain is Queuine tRNA-ribosyltransferase, found in Lactococcus lactis subsp. lactis (strain IL1403) (Streptococcus lactis).